Here is a 364-residue protein sequence, read N- to C-terminus: Peptide chain release factor 1 (364 aa).

Glutamine 238 carries the N5-methylglutamine modification.

This sequence belongs to the prokaryotic/mitochondrial release factor family. In terms of processing, methylated by PrmC. Methylation increases the termination efficiency of RF1.

It is found in the cytoplasm. Peptide chain release factor 1 directs the termination of translation in response to the peptide chain termination codons UAG and UAA. In Psychrobacter sp. (strain PRwf-1), this protein is Peptide chain release factor 1.